Here is a 307-residue protein sequence, read N- to C-terminus: Aspartate carbamoyltransferase catalytic subunit (307 aa).

Residues R59 and T60 each coordinate carbamoyl phosphate. An L-aspartate-binding site is contributed by K87. Residues R109, H139, and Q142 each contribute to the carbamoyl phosphate site. L-aspartate contacts are provided by R172 and R224. The carbamoyl phosphate site is built by A265 and P266.

It belongs to the aspartate/ornithine carbamoyltransferase superfamily. ATCase family. In terms of assembly, heterododecamer (2C3:3R2) of six catalytic PyrB chains organized as two trimers (C3), and six regulatory PyrI chains organized as three dimers (R2).

It catalyses the reaction carbamoyl phosphate + L-aspartate = N-carbamoyl-L-aspartate + phosphate + H(+). It participates in pyrimidine metabolism; UMP biosynthesis via de novo pathway; (S)-dihydroorotate from bicarbonate: step 2/3. In terms of biological role, catalyzes the condensation of carbamoyl phosphate and aspartate to form carbamoyl aspartate and inorganic phosphate, the committed step in the de novo pyrimidine nucleotide biosynthesis pathway. This chain is Aspartate carbamoyltransferase catalytic subunit, found in Streptococcus agalactiae serotype Ia (strain ATCC 27591 / A909 / CDC SS700).